The primary structure comprises 123 residues: Small ribosomal subunit protein uS13 (123 aa).

Residues 93 to 123 (HRKGLPVRGQNTKNNARTRKGPAKAIAGKKK) are disordered. Residues 108-123 (ARTRKGPAKAIAGKKK) are compositionally biased toward basic residues.

The protein belongs to the universal ribosomal protein uS13 family. As to quaternary structure, part of the 30S ribosomal subunit. Forms a loose heterodimer with protein S19. Forms two bridges to the 50S subunit in the 70S ribosome.

In terms of biological role, located at the top of the head of the 30S subunit, it contacts several helices of the 16S rRNA. In the 70S ribosome it contacts the 23S rRNA (bridge B1a) and protein L5 of the 50S subunit (bridge B1b), connecting the 2 subunits; these bridges are implicated in subunit movement. Contacts the tRNAs in the A and P-sites. In Leuconostoc mesenteroides subsp. mesenteroides (strain ATCC 8293 / DSM 20343 / BCRC 11652 / CCM 1803 / JCM 6124 / NCDO 523 / NBRC 100496 / NCIMB 8023 / NCTC 12954 / NRRL B-1118 / 37Y), this protein is Small ribosomal subunit protein uS13.